Consider the following 428-residue polypeptide: Stromal membrane-associated protein 2 (428 aa).

An Arf-GAP domain is found at 13-139 (QAVLANLLLE…INVLRKEKDD (127 aa)). The C4-type zinc finger occupies 28–51 (CADCQSKGPRWASWNIGVFICIRC). Residues serine 127, serine 219, serine 224, serine 230, and serine 239 each carry the phosphoserine modification. Positions 163-231 (MPQKKEDAQL…SVSRKAVGSM (69 aa)) are interaction with clathrin heavy chains. The disordered stretch occupies residues 218–262 (PSPSSVSRKAVGSMPTAGSAGSVPENLNLFPEPGSKSEETGKKQL). Basic and acidic residues predominate over residues 252-262 (SKSEETGKKQL). Positions 339 to 428 (MGGMQASMMG…NQTLSPQMWK (90 aa)) are interaction with PICALM.

In terms of assembly, interacts with ARF1. Interacts with PICALM and clathrin heavy chains.

It is found in the cytoplasm. Functionally, GTPase activating protein that acts on ARF1. Can also activate ARF6 (in vitro). May play a role in clathrin-dependent retrograde transport from early endosomes to the trans-Golgi network. The protein is Stromal membrane-associated protein 2 (Smap2) of Mus musculus (Mouse).